The sequence spans 139 residues: Phosphoribosyl-AMP cyclohydrolase (139 aa).

D91 provides a ligand contact to Mg(2+). Residue C92 coordinates Zn(2+). Residues D93 and D95 each contribute to the Mg(2+) site. The Zn(2+) site is built by C110 and C117.

It belongs to the PRA-CH family. Homodimer. The cofactor is Mg(2+). Requires Zn(2+) as cofactor.

It localises to the cytoplasm. The enzyme catalyses 1-(5-phospho-beta-D-ribosyl)-5'-AMP + H2O = 1-(5-phospho-beta-D-ribosyl)-5-[(5-phospho-beta-D-ribosylamino)methylideneamino]imidazole-4-carboxamide. Its pathway is amino-acid biosynthesis; L-histidine biosynthesis; L-histidine from 5-phospho-alpha-D-ribose 1-diphosphate: step 3/9. Catalyzes the hydrolysis of the adenine ring of phosphoribosyl-AMP. The chain is Phosphoribosyl-AMP cyclohydrolase from Brucella abortus (strain S19).